A 117-amino-acid chain; its full sequence is Large ribosomal subunit protein bL19 (117 aa).

It belongs to the bacterial ribosomal protein bL19 family.

Functionally, this protein is located at the 30S-50S ribosomal subunit interface and may play a role in the structure and function of the aminoacyl-tRNA binding site. The sequence is that of Large ribosomal subunit protein bL19 from Exiguobacterium sibiricum (strain DSM 17290 / CCUG 55495 / CIP 109462 / JCM 13490 / 255-15).